Here is a 517-residue protein sequence, read N- to C-terminus: MARLTLRPHNHFFSSPIYAHKQPFLSVYTIFPHHHQNPLIKSRVKCSASGTERVRESKKLPPKDPIEDPKPQLPIPEVLSTETGFEQNWPPWKNIPQRYKLIGATSLAFVICNMDKVNLSIAIIPMSHQFGWSSSVAGLVQSSFFWGYALSQLPGGWLSKIFGGRKVLEIGVFTWSFATALVPLLAGFMPGLIFSRILVGIGEGVSPSAATDLIARTIPVKERSRAVGFVFGGLSLGSVMGLLLAPPIIETFNWESVFYLFGLLGVGWFVGFQFLNEEEVSYKGNEISTSHKSENATKEELGSSLKEIPWKSFFQSPAVWAMIYTHFCGSWGHYTCLSWLPTYFSEALSLNLTEAAWVSILPPLASIVVTSLASQFADYLITNGVDTTTVRKICQTIAFVAPAICMTLSSVDIGLPPWEIVGILTAGLALSSFALSGLYCTHQDISPEYASILLGITNTVGAVPGIVGVALTGFLLDSTHSWTMSLFVPSIFFYLTGTVVWLAFASSEPQTFRKEDS.

The interval 51-73 (TERVRESKKLPPKDPIEDPKPQL) is disordered. Residues 52–70 (ERVRESKKLPPKDPIEDPK) are compositionally biased toward basic and acidic residues. A run of 10 helical transmembrane segments spans residues 130–150 (FGWS…GYAL), 170–190 (IGVF…GFMP), 229–249 (FVFG…PPII), 255–275 (ESVF…FQFL), 312–332 (SFFQ…GSWG), 352–372 (LTEA…VTSL), 397–417 (IAFV…GLPP), 420–440 (IVGI…GLYC), 452–472 (ILLG…VALT), and 484–504 (MSLF…WLAF).

This sequence belongs to the major facilitator superfamily. Sodium/anion cotransporter (TC 2.A.1.14) family. As to expression, expressed in leaf veins and sepals.

It localises to the plastid. The protein resides in the chloroplast membrane. Its function is as follows. Inorganic phosphate and probable anion transporter. The polypeptide is Probable anion transporter 6, chloroplastic (ANTR6) (Arabidopsis thaliana (Mouse-ear cress)).